The following is a 98-amino-acid chain: Lipolysis-activating peptide 1-alpha chain (98 aa).

An N-terminal signal peptide occupies residues 1-22 (MMKLVLFGIIVILFSMIGSIHG). Residues 26 to 89 (PGNYPLNTYG…IWDAVKRHCK (64 aa)) form the LCN-type CS-alpha/beta domain. Disulfide bonds link Cys40–Cys63, Cys49–Cys68, and Cys53–Cys70. A Lysine amide modification is found at Lys96.

It belongs to the long (3 C-C) scorpion toxin superfamily. In terms of assembly, monomer (edited version) and heterodimer (non-edited version) of this alpha chain and a beta chain (AC B8XGZ8). Expressed by the venom gland.

It is found in the secreted. In terms of biological role, the heterodimer non-edited LVP1 induces lipolysis in rat adipocytes. Induction of lipolysis by LVP1 appears to be mediated through the beta-2 adrenergic receptor pathway (ADRB2). Functionally, the edited BmKBTx-like, similar to beta-toxins, may modulate voltage-gated sodium channels (Nav) and may block voltage-gated potassium channels (Kv). The chain is Lipolysis-activating peptide 1-alpha chain from Buthus israelis (Israeli scorpion).